The primary structure comprises 678 residues: 1,4-alpha-glucan-branching enzyme (678 aa).

(1,4-alpha-D-glucosyl)n contacts are provided by W88 and K124. D338 acts as the Nucleophile in catalysis. E391 acts as the Proton donor in catalysis.

It belongs to the glycosyl hydrolase 13 family. GlgB subfamily. As to quaternary structure, monomer.

It carries out the reaction Transfers a segment of a (1-&gt;4)-alpha-D-glucan chain to a primary hydroxy group in a similar glucan chain.. It functions in the pathway glycan biosynthesis; glycogen biosynthesis. Functionally, glycogen-branching enzyme participates in the glycogen biosynthetic process along with glycogenin and glycogen synthase. Generates alpha-1,6-glucosidic branches from alpha-1,4-linked glucose chains, to increase solubility of the glycogen polymer. This Dictyostelium discoideum (Social amoeba) protein is 1,4-alpha-glucan-branching enzyme (glgB).